The sequence spans 479 residues: Aspartyl/glutamyl-tRNA(Asn/Gln) amidotransferase subunit B (479 aa).

It belongs to the GatB/GatE family. GatB subfamily. Heterotrimer of A, B and C subunits.

The enzyme catalyses L-glutamyl-tRNA(Gln) + L-glutamine + ATP + H2O = L-glutaminyl-tRNA(Gln) + L-glutamate + ADP + phosphate + H(+). It carries out the reaction L-aspartyl-tRNA(Asn) + L-glutamine + ATP + H2O = L-asparaginyl-tRNA(Asn) + L-glutamate + ADP + phosphate + 2 H(+). In terms of biological role, allows the formation of correctly charged Asn-tRNA(Asn) or Gln-tRNA(Gln) through the transamidation of misacylated Asp-tRNA(Asn) or Glu-tRNA(Gln) in organisms which lack either or both of asparaginyl-tRNA or glutaminyl-tRNA synthetases. The reaction takes place in the presence of glutamine and ATP through an activated phospho-Asp-tRNA(Asn) or phospho-Glu-tRNA(Gln). The protein is Aspartyl/glutamyl-tRNA(Asn/Gln) amidotransferase subunit B of Mesoplasma florum (strain ATCC 33453 / NBRC 100688 / NCTC 11704 / L1) (Acholeplasma florum).